Here is a 453-residue protein sequence, read N- to C-terminus: Frizzled/smoothened-like sans CRD protein G (453 aa).

The first 24 residues, 1-24 (MIYILKNFIIILFFLLIILKRIES), serve as a signal peptide directing secretion. Over 25-89 (QSLPSLPSPT…PFFTLDEWNK (65 aa)) the chain is Extracellular. N-linked (GlcNAc...) asparagine glycosylation is found at N49 and N67. Residues 90 to 110 (FLYMSLVMGTISFLCGLFLLI) traverse the membrane as a helical segment. The Cytoplasmic portion of the chain corresponds to 111–124 (TYSPIVNKTHNRHT). A helical transmembrane segment spans residues 125 to 145 (IGVMCMSFGVCLAMCSDMWNF). At 146-170 (GSNFTDQKSICPSPGQYLTTSNSRC) the chain is on the extracellular side. N-linked (GlcNAc...) asparagine glycosylation occurs at N148. A helical membrane pass occupies residues 171-191 (LGSGIVLQFGGVFGFLNWTLL). Residues 192–209 (SFDLFMNIKGIITKNYDK) lie on the Cytoplasmic side of the membrane. The helical transmembrane segment at 210–230 (YYFVATFIIAIIFTFVPIVND) threads the bilayer. Topologically, residues 231–250 (QYSMSYIGLGCWLGSAVYQL) are extracellular. A helical membrane pass occupies residues 251–271 (IFFWILLSICLIVSSVFIILI). The Cytoplasmic segment spans residues 272–296 (LKEIYIIIKQSKQKTSLKGNIRPLL). A helical membrane pass occupies residues 297–317 (CITVTSFAFFYMFFYYISIVI). Residues 318–352 (EGDYYERILNEYTDCLMDPTKDVSECKFPRMSVAN) are Extracellular-facing. The helical transmembrane segment at 353–373 (EFVFLLCLRLLGIGAFIFYGI) threads the bilayer. The Cytoplasmic segment spans residues 374–453 (NKEVKKIWLN…DDNFKPIIIK (80 aa)).

This sequence belongs to the G-protein coupled receptor Fz/Smo family.

Its subcellular location is the membrane. This chain is Frizzled/smoothened-like sans CRD protein G (fscG), found in Dictyostelium discoideum (Social amoeba).